The chain runs to 240 residues: Uridylate kinase (240 aa).

12–15 (KLSG) lines the ATP pocket. An involved in allosteric activation by GTP region spans residues 20–25 (GEKGFG). Glycine 54 is a UMP binding site. ATP-binding residues include glycine 55 and arginine 59. Residues aspartate 74 and 135-142 (TGSPYFST) contribute to the UMP site. ATP contacts are provided by asparagine 163, tyrosine 169, and aspartate 172.

The protein belongs to the UMP kinase family. Homohexamer.

The protein resides in the cytoplasm. The enzyme catalyses UMP + ATP = UDP + ADP. The protein operates within pyrimidine metabolism; CTP biosynthesis via de novo pathway; UDP from UMP (UMPK route): step 1/1. Allosterically activated by GTP. Inhibited by UTP. In terms of biological role, catalyzes the reversible phosphorylation of UMP to UDP. This chain is Uridylate kinase, found in Lactiplantibacillus plantarum (strain ATCC BAA-793 / NCIMB 8826 / WCFS1) (Lactobacillus plantarum).